Here is a 1205-residue protein sequence, read N- to C-terminus: A disintegrin and metalloproteinase with thrombospondin motifs 2 (1205 aa).

Residues 1-28 form the signal peptide; that stretch reads MDPPAGAAGRLLCPALLLLLLLPLPADA. Positions 29-253 are excised as a propeptide; that stretch reads RLAAAAADPP…VNSSRRRMRR (225 aa). Residues N104 and N245 are each glycosylated (N-linked (GlcNAc...) asparagine). The Peptidase M12B domain occupies 260 to 464; it reads YNIEVLLGVD…HSYDCLRDDP (205 aa). Cystine bridges form between C337–C386, C380–C459, C419–C445, C486–C511, C497–C520, C506–C539, C533–C544, C567–C604, C571–C609, and C582–C594. A Zn(2+)-binding site is contributed by H402. The active site involves E403. 2 residues coordinate Zn(2+): H406 and H412. The region spanning 474-554 is the Disintegrin domain; the sequence is QLPGLHYSMN…IWLTPDILKR (81 aa). The region spanning 555–610 is the TSP type-1 1 domain; sequence DGNWGAWSPFGSCSRTCGTGVKFRTRQCDNPHPANGGRTCSGLAYDFQLCNSQDCP. Positions 685–687 match the Cell attachment site motif; that stretch reads RGD. The segment at 717 to 845 is spacer; the sequence is KVVKGTFSRS…NVDDNNVLED (129 aa). TSP type-1 domains are found at residues 848–906, 908–968, and 969–1023; these read VGYE…NPQE, SQPV…NREL, and CPGR…GPCP. 3 N-linked (GlcNAc...) asparagine glycosylation sites follow: N942, N943, and N987. 3 disulfide bridges follow: C981–C1017, C985–C1022, and C996–C1006. N-linked (GlcNAc...) asparagine glycosylation is present at N1025. The PLAC domain occupies 1053–1091; that stretch reads SKGRCQGDKSVFCRMEVLSRYCSIPGYNKLCCKSCNPHD. 3 N-linked (GlcNAc...) asparagine glycosylation sites follow: N1092, N1139, and N1144. The disordered stretch occupies residues 1163–1184; that stretch reads GLEDEVQPPNLIPRRPSPYEKT.

May belong to a multimeric complex. Binds specifically to collagen type XIV. The cofactor is Zn(2+). The N-terminus is blocked. In terms of processing, the precursor is cleaved by a furin endopeptidase. Post-translationally, glycosylated. Can be O-fucosylated by POFUT2 on a serine or a threonine residue found within the consensus sequence C1-X(2)-(S/T)-C2-G of the TSP type-1 repeat domains where C1 and C2 are the first and second cysteine residue of the repeat, respectively. Fucosylated repeats can then be further glycosylated by the addition of a beta-1,3-glucose residue by the glucosyltransferase, B3GALTL. Fucosylation mediates the efficient secretion of ADAMTS family members. Can also be C-glycosylated with one or two mannose molecules on tryptophan residues within the consensus sequence W-X-X-W of the TPRs, and N-glycosylated. These other glycosylations can also facilitate secretion. Enzymatic activity is detected at high level in all type I collagen-rich tissues such as skin, bones, tendons and aorta and at low level in brain and thymus. The mRNA levels were disproportionately high in heart, liver, retina and muscle.

Its subcellular location is the secreted. It is found in the extracellular space. The protein resides in the extracellular matrix. It catalyses the reaction Cleaves the N-propeptide of collagen chain alpha1(I) at Pro-|-Gln and of alpha1(II) and alpha2(I) at Ala-|-Gln.. In terms of biological role, cleaves the propeptides of type I and II collagen prior to fibril assembly. Does not act on type III collagen. Cleaves lysyl oxidase LOX at a site downstream of its propeptide cleavage site to produce a short LOX form with reduced collagen-binding activity. This Bos taurus (Bovine) protein is A disintegrin and metalloproteinase with thrombospondin motifs 2 (ADAMTS2).